A 315-amino-acid polypeptide reads, in one-letter code: Solute carrier family 25 member 32 (315 aa).

Solcar repeat units follow at residues 20 to 109 (HVRY…IKSY), 118 to 209 (LEAT…LKLK), and 222 to 306 (LSTV…VSHF). A run of 6 helical transmembrane segments spans residues 26 to 43 (LIAG…LHPL), 89 to 106 (IWGA…YNAI), 123 to 143 (YLVS…PLWV), 186 to 203 (FVPG…FMAY), 227 to 243 (YISV…AATY), and 281 to 300 (GIAP…FVVY).

It belongs to the mitochondrial carrier (TC 2.A.29) family. Ubiquitous.

The protein resides in the mitochondrion inner membrane. It carries out the reaction FAD(in) = FAD(out). Functionally, facilitates flavin adenine dinucleotide (FAD) translocation across the mitochondrial inner membrane into the mitochondrial matrix where it acts as a redox cofactor to assist flavoenzyme activities in fundamental metabolic processes including fatty acid beta-oxidation, amino acid and choline metabolism as well as mitochondrial electron transportation. In particular, provides FAD to DLD dehydrogenase of the glycine cleavage system, part of mitochondrial one-carbon metabolic pathway involved in neural tube closure in early embryogenesis. This is Solute carrier family 25 member 32 from Homo sapiens (Human).